The primary structure comprises 655 residues: Alpha-amylase (655 aa).

The active-site Nucleophile is Glu123. Asp214 (proton donor) is an active-site residue.

The protein belongs to the glycosyl hydrolase 57 family.

It catalyses the reaction Endohydrolysis of (1-&gt;4)-alpha-D-glucosidic linkages in polysaccharides containing three or more (1-&gt;4)-alpha-linked D-glucose units.. This is Alpha-amylase (amyA) from Pyrococcus abyssi (strain GE5 / Orsay).